A 476-amino-acid chain; its full sequence is Aspartyl/glutamyl-tRNA(Asn/Gln) amidotransferase subunit B (476 aa).

Belongs to the GatB/GatE family. GatB subfamily. In terms of assembly, heterotrimer of A, B and C subunits.

The catalysed reaction is L-glutamyl-tRNA(Gln) + L-glutamine + ATP + H2O = L-glutaminyl-tRNA(Gln) + L-glutamate + ADP + phosphate + H(+). It catalyses the reaction L-aspartyl-tRNA(Asn) + L-glutamine + ATP + H2O = L-asparaginyl-tRNA(Asn) + L-glutamate + ADP + phosphate + 2 H(+). Functionally, allows the formation of correctly charged Asn-tRNA(Asn) or Gln-tRNA(Gln) through the transamidation of misacylated Asp-tRNA(Asn) or Glu-tRNA(Gln) in organisms which lack either or both of asparaginyl-tRNA or glutaminyl-tRNA synthetases. The reaction takes place in the presence of glutamine and ATP through an activated phospho-Asp-tRNA(Asn) or phospho-Glu-tRNA(Gln). The chain is Aspartyl/glutamyl-tRNA(Asn/Gln) amidotransferase subunit B from Clostridium botulinum (strain Alaska E43 / Type E3).